Here is a 765-residue protein sequence, read N- to C-terminus: Probable exo-1,4-beta-xylosidase bxlB (765 aa).

A signal peptide spans M1–A25. N67 and N107 each carry an N-linked (GlcNAc...) asparagine glycan. D293 is a catalytic residue. N345, N412, N423, N464, and N761 each carry an N-linked (GlcNAc...) asparagine glycan.

This sequence belongs to the glycosyl hydrolase 3 family.

It is found in the secreted. It carries out the reaction Hydrolysis of (1-&gt;4)-beta-D-xylans, to remove successive D-xylose residues from the non-reducing termini.. It participates in glycan degradation; xylan degradation. Functionally, xylan 1,4-beta-xylosidase involved in the hydrolysis of xylan, a major structural heterogeneous polysaccharide found in plant biomass representing the second most abundant polysaccharide in the biosphere, after cellulose. The protein is Probable exo-1,4-beta-xylosidase bxlB (bxlB) of Aspergillus terreus (strain NIH 2624 / FGSC A1156).